The following is a 485-amino-acid chain: Mitochondrial metalloendopeptidase OMA1 (485 aa).

A mitochondrion-targeting transit peptide spans Met1–Phe16. The Mitochondrial matrix portion of the chain corresponds to Ala17–Arg147. Residues Thr148 to Thr168 form a helical membrane-spanning segment. At Glu169–Leu485 the chain is on the mitochondrial intermembrane side. Residue His352 coordinates Zn(2+). Residue Glu353 is part of the active site. Zn(2+)-binding residues include His356 and Glu405. Residues Lys456 to Leu485 are required for protease activation.

It belongs to the peptidase M48A family. As to quaternary structure, homooligomer. The cofactor is Zn(2+).

The protein localises to the mitochondrion inner membrane. In terms of biological role, protease that is part of the quality control system in the inner membrane of mitochondria. Metalloendopeptidase that modulates the oxidative phosphorylation (OXPHOS) system and plant growth. Involved in tolerance mechanisms to heat, osmotic and oxidative stresses. In Arabidopsis thaliana (Mouse-ear cress), this protein is Mitochondrial metalloendopeptidase OMA1.